The following is a 291-amino-acid chain: Protease HtpX (291 aa).

2 helical membrane-spanning segments follow: residues 4–24 (IVIFLLTNLAVMVVFGILLTC) and 37–57 (IISGLFGFCGAFISLLMSKFI). His-139 lines the Zn(2+) pocket. Residue Glu-140 is part of the active site. His-143 serves as a coordination point for Zn(2+). Transmembrane regions (helical) follow at residues 147–167 (GDMVTITLISGIVNTFVIFIS) and 195–215 (IVSTILELAFGILASIIVLWF). Glu-220 contributes to the Zn(2+) binding site.

Belongs to the peptidase M48B family. Zn(2+) is required as a cofactor.

It localises to the cell membrane. This Baumannia cicadellinicola subsp. Homalodisca coagulata protein is Protease HtpX.